We begin with the raw amino-acid sequence, 54 residues long: Hydrophobic protein RCI2A (54 aa).

Helical transmembrane passes span 2-22 (STAT…GVFL) and 32-52 (ICLV…IYVL).

Belongs to the UPF0057 (PMP3) family.

The protein resides in the membrane. This is Hydrophobic protein RCI2A (RCI2A) from Arabidopsis thaliana (Mouse-ear cress).